The primary structure comprises 350 residues: RNA 3'-terminal phosphate cyclase (350 aa).

ATP contacts are provided by residues Gln-100 and 290–294; that span reads FLGDQ. The active-site Tele-AMP-histidine intermediate is His-314.

Belongs to the RNA 3'-terminal cyclase family. Type 1 subfamily.

The protein resides in the cytoplasm. It catalyses the reaction a 3'-end 3'-phospho-ribonucleotide-RNA + ATP = a 3'-end 2',3'-cyclophospho-ribonucleotide-RNA + AMP + diphosphate. In terms of biological role, catalyzes the conversion of 3'-phosphate to a 2',3'-cyclic phosphodiester at the end of RNA. The mechanism of action of the enzyme occurs in 3 steps: (A) adenylation of the enzyme by ATP; (B) transfer of adenylate to an RNA-N3'P to produce RNA-N3'PP5'A; (C) and attack of the adjacent 2'-hydroxyl on the 3'-phosphorus in the diester linkage to produce the cyclic end product. The biological role of this enzyme is unknown but it is likely to function in some aspects of cellular RNA processing. The chain is RNA 3'-terminal phosphate cyclase from Thermococcus sibiricus (strain DSM 12597 / MM 739).